A 62-amino-acid polypeptide reads, in one-letter code: Photosystem II reaction center protein K (62 aa).

Positions methionine 1–alanine 25 are excised as a propeptide. A helical membrane pass occupies residues isoleucine 33–phenylalanine 53.

Belongs to the PsbK family. In terms of assembly, PSII is composed of 1 copy each of membrane proteins PsbA, PsbB, PsbC, PsbD, PsbE, PsbF, PsbH, PsbI, PsbJ, PsbK, PsbL, PsbM, PsbT, PsbX, PsbY, PsbZ, Psb30/Ycf12, at least 3 peripheral proteins of the oxygen-evolving complex and a large number of cofactors. It forms dimeric complexes.

The protein resides in the plastid. It is found in the chloroplast thylakoid membrane. One of the components of the core complex of photosystem II (PSII). PSII is a light-driven water:plastoquinone oxidoreductase that uses light energy to abstract electrons from H(2)O, generating O(2) and a proton gradient subsequently used for ATP formation. It consists of a core antenna complex that captures photons, and an electron transfer chain that converts photonic excitation into a charge separation. This chain is Photosystem II reaction center protein K, found in Agrostis stolonifera (Creeping bentgrass).